We begin with the raw amino-acid sequence, 126 residues long: Small ribosomal subunit protein uS8 (126 aa).

This sequence belongs to the universal ribosomal protein uS8 family. In terms of assembly, part of the 30S ribosomal subunit. Contacts proteins S5 and S12.

One of the primary rRNA binding proteins, it binds directly to 16S rRNA central domain where it helps coordinate assembly of the platform of the 30S subunit. This is Small ribosomal subunit protein uS8 from Lawsonia intracellularis (strain PHE/MN1-00).